We begin with the raw amino-acid sequence, 318 residues long: NADH-ubiquinone oxidoreductase chain 1 (318 aa).

The next 8 helical transmembrane spans lie at 2–22 (FFINIISLIIPILLAVAFLTL), 70–90 (MFILAPILALSLALTMWIPLP), 100–120 (LGVLFMLAMSSLAVYSILWSG), 147–167 (AIILLSVLLMNGSFTLSTLII), 171–191 (HMWLIFPAWPLAMMWFISTLA), 223–243 (FFLAEYANIIMMNILTTILFF), 253–273 (ELYSINFTMKTLLLTICFLWI), and 294–314 (LPLTLALCMWHVALPIITASI).

This sequence belongs to the complex I subunit 1 family. In terms of assembly, core subunit of respiratory chain NADH dehydrogenase (Complex I) which is composed of 45 different subunits.

Its subcellular location is the mitochondrion inner membrane. It catalyses the reaction a ubiquinone + NADH + 5 H(+)(in) = a ubiquinol + NAD(+) + 4 H(+)(out). Functionally, core subunit of the mitochondrial membrane respiratory chain NADH dehydrogenase (Complex I) which catalyzes electron transfer from NADH through the respiratory chain, using ubiquinone as an electron acceptor. Essential for the catalytic activity and assembly of complex I. The sequence is that of NADH-ubiquinone oxidoreductase chain 1 (MT-ND1) from Canis lupus familiaris (Dog).